Consider the following 666-residue polypeptide: Fructose-1,6-bisphosphatase class 3 (666 aa).

It belongs to the FBPase class 3 family. Mn(2+) serves as cofactor.

It catalyses the reaction beta-D-fructose 1,6-bisphosphate + H2O = beta-D-fructose 6-phosphate + phosphate. It functions in the pathway carbohydrate biosynthesis; gluconeogenesis. The protein is Fructose-1,6-bisphosphatase class 3 of Phocaeicola vulgatus (strain ATCC 8482 / DSM 1447 / JCM 5826 / CCUG 4940 / NBRC 14291 / NCTC 11154) (Bacteroides vulgatus).